The sequence spans 159 residues: ATP synthase subunit b 2 (159 aa).

Residues 1 to 21 (MDATFWAFIALVIFVAIVVYM) form a helical membrane-spanning segment.

This sequence belongs to the ATPase B chain family. As to quaternary structure, F-type ATPases have 2 components, F(1) - the catalytic core - and F(0) - the membrane proton channel. F(1) has five subunits: alpha(3), beta(3), gamma(1), delta(1), epsilon(1). F(0) has three main subunits: a(1), b(2) and c(10-14). The alpha and beta chains form an alternating ring which encloses part of the gamma chain. F(1) is attached to F(0) by a central stalk formed by the gamma and epsilon chains, while a peripheral stalk is formed by the delta and b chains.

It is found in the cell inner membrane. F(1)F(0) ATP synthase produces ATP from ADP in the presence of a proton or sodium gradient. F-type ATPases consist of two structural domains, F(1) containing the extramembraneous catalytic core and F(0) containing the membrane proton channel, linked together by a central stalk and a peripheral stalk. During catalysis, ATP synthesis in the catalytic domain of F(1) is coupled via a rotary mechanism of the central stalk subunits to proton translocation. Its function is as follows. Component of the F(0) channel, it forms part of the peripheral stalk, linking F(1) to F(0). This is ATP synthase subunit b 2 from Brucella suis (strain ATCC 23445 / NCTC 10510).